We begin with the raw amino-acid sequence, 221 residues long: Enolase-phosphatase E1 (221 aa).

This sequence belongs to the HAD-like hydrolase superfamily. MasA/MtnC family. Monomer. The cofactor is Mg(2+).

The enzyme catalyses 5-methylsulfanyl-2,3-dioxopentyl phosphate + H2O = 1,2-dihydroxy-5-(methylsulfanyl)pent-1-en-3-one + phosphate. The protein operates within amino-acid biosynthesis; L-methionine biosynthesis via salvage pathway; L-methionine from S-methyl-5-thio-alpha-D-ribose 1-phosphate: step 3/6. Its pathway is amino-acid biosynthesis; L-methionine biosynthesis via salvage pathway; L-methionine from S-methyl-5-thio-alpha-D-ribose 1-phosphate: step 4/6. Bifunctional enzyme that catalyzes the enolization of 2,3-diketo-5-methylthiopentyl-1-phosphate (DK-MTP-1-P) into the intermediate 2-hydroxy-3-keto-5-methylthiopentenyl-1-phosphate (HK-MTPenyl-1-P), which is then dephosphorylated to form the acireductone 1,2-dihydroxy-3-keto-5-methylthiopentene (DHK-MTPene). This chain is Enolase-phosphatase E1, found in Hydrogenobaculum sp. (strain Y04AAS1).